A 706-amino-acid chain; its full sequence is MATDHTSDAPDPKQRDLESARFRRDTGYLTTQQGVRVDHTDDALTVGERGPTLLEDFHAREKITHFDHERIPERVVHARGAGAYGYFEPYDDRLAQYTAAKFLTSPGTRTPVFVRFSTVAGSRGSADTVRDVRGFATKFYTEQGNYDLVGNNFPVFFIQDGIKFPVLVHAVKPEPHNEIPQAQSAHDTLWDFVSLQPETLHAIMWLMSDRALPRSYRMMQGFGVHTFRLVNARGRGTFVKFHWKPRLGVHSLIWDECQKIAGKDPDYNRRDLWEAIESGQYPEWELGVQLVAEDDEFSFDFDLLDATKIIPEEQVPVLPVGKMVLNRNPDNFFAETEQVAFHTANVVPGIDFTNDPLLQFRNFSYLDTQLIRLGGPNFAQLPVNRPVAQVRTNQHDGYAQHAIPQGRSSYFKNSIGGGCPALADEDVFRHYTQRVDGQTIGKRAEAFQNHYGQARMFFKSMSPVEAEHIVAAFAFELGKVEMPEIRSAVVAQLARVDDQLAAQVAAKLGLPEPPEEQVDESAPVSPALSQVTDGGDTIASRRIAVLAADGVDVVGTQRFTELMEQRGAVVEVLAPVAGGTLAGGSGGELRVDRSFTTMASVLYDAVVVACGPRSVSTLSDDGYAVHFVTEAYKHLKPIGAYGAGVDLLRKAGIDNRLAEDTDVLNDQAVVTTKAAADELPERFAEEFAAALAQHRCWQRRTDAVPA.

Catalysis depends on residues His-77 and Asn-151. Tyr-365 is a binding site for heme. The interval 512–532 (EPPEEQVDESAPVSPALSQVT) is disordered.

It belongs to the catalase family. HPII subfamily. It depends on heme as a cofactor.

Its subcellular location is the cytoplasm. It carries out the reaction 2 H2O2 = O2 + 2 H2O. Functionally, decomposes hydrogen peroxide into water and oxygen; serves to protect cells from the toxic effects of hydrogen peroxide. This chain is Catalase HPII (katE), found in Mycobacterium avium.